We begin with the raw amino-acid sequence, 232 residues long: Ion-translocating oxidoreductase complex subunit E (232 aa).

Helical transmembrane passes span 39-59, 69-89, 92-112, 125-145, and 182-202; these read LGLG…ISSL, IPIY…LINA, FGLY…CIVV, ALSA…MFVL, and PFLL…MLAV.

It belongs to the NqrDE/RnfAE family. As to quaternary structure, the complex is composed of six subunits: RnfA, RnfB, RnfC, RnfD, RnfE and RnfG.

It localises to the cell inner membrane. Functionally, part of a membrane-bound complex that couples electron transfer with translocation of ions across the membrane. The protein is Ion-translocating oxidoreductase complex subunit E of Klebsiella pneumoniae (strain 342).